A 185-amino-acid chain; its full sequence is Photosystem I assembly protein Ycf4 (185 aa).

The next 2 helical transmembrane spans lie at 24 to 44 (YIIG…SISS) and 58 to 78 (ALLF…ANLL).

This sequence belongs to the Ycf4 family.

The protein localises to the cellular thylakoid membrane. In terms of biological role, seems to be required for the assembly of the photosystem I complex. The chain is Photosystem I assembly protein Ycf4 from Prochlorococcus marinus (strain MIT 9215).